The following is a 155-amino-acid chain: Riboflavin synthase (155 aa).

The protein belongs to the DMRL synthase family.

It catalyses the reaction 2 6,7-dimethyl-8-(1-D-ribityl)lumazine + H(+) = 5-amino-6-(D-ribitylamino)uracil + riboflavin. Its pathway is cofactor biosynthesis; riboflavin biosynthesis; riboflavin from 2-hydroxy-3-oxobutyl phosphate and 5-amino-6-(D-ribitylamino)uracil: step 2/2. This is Riboflavin synthase (ribC) from Aeropyrum pernix (strain ATCC 700893 / DSM 11879 / JCM 9820 / NBRC 100138 / K1).